The primary structure comprises 125 residues: Large ribosomal subunit protein uL24 (125 aa).

The protein belongs to the universal ribosomal protein uL24 family. Part of the 50S ribosomal subunit.

Functionally, one of two assembly initiator proteins, it binds directly to the 5'-end of the 23S rRNA, where it nucleates assembly of the 50S subunit. In terms of biological role, one of the proteins that surrounds the polypeptide exit tunnel on the outside of the subunit. This Mycoplasma mobile (strain ATCC 43663 / 163K / NCTC 11711) (Mesomycoplasma mobile) protein is Large ribosomal subunit protein uL24.